The sequence spans 3289 residues: tRNA nuclease CdiA (3289 aa).

Positions 1-32 are cleaved as a signal peptide; that stretch reads MHQPPVRFTYRLLSYLISTIIAGQPLLPAVGA. The tract at residues 36–322 is two-partner system transport domain (TPS); it reads PQNGAGMDKA…AGGNLSVSSR (287 aa). An FHA-1 region spans residues 351–1398; it reads EKLTAGRDVT…IVVRTGHLLN (1048 aa). Positions 595 to 615 are disordered; sequence AVNASEKLTHSGKSSAPSLSL. The receptor binding domain (RBD) stretch occupies residues 1399 to 1689; that stretch reads QREGFSATTT…LTGQTGISDD (291 aa). The segment at 1690-1874 is YP domain; that stretch reads WPLPSGNNGY…LSPEDITLHN (185 aa). A periplasmic FHA-1 repeat (pFR) region spans residues 1875-1935; sequence GSVISGNNVQ…DLSAIGDISN (61 aa). The FHA-2 stretch occupies residues 1979–2653; that stretch reads TDTGPVATIK…TSKYDSKQTS (675 aa). Residues 2097–2113 are compositionally biased toward basic and acidic residues; that stretch reads RESKNSRNGRSESHESH. 3 disordered regions span residues 2097 to 2116, 2332 to 2356, and 2466 to 2513; these read RESK…HAAV, GSSK…TIGS, and TGDP…TGKN. Composition is skewed to polar residues over residues 2344-2356 and 2472-2507; these read GTTQ…TIGS and TGVS…NLSV. The segment at 2992 to 3034 is pretoxin (PT) domain; it reads SDLSEEQKQTISTLATVSAGLAGGLTGNSTASAAVGAQSGKNA. A VENN CT cleavage motif motif is present at residues 3035–3038; that stretch reads VENN. A C-terminal effector domain (CT); has tRNase activity region spans residues 3035-3289; sequence VENNYLSVSE…VGHIQPVKVK (255 aa). The segment at 3039 to 3197 is inner membrane translocation domain (IMTD), targets protein to PtsG; that stretch reads YLSVSEKTEL…PLIGQAASNK (159 aa).

This sequence in the N-terminal section; belongs to the CdiA toxin family. In terms of assembly, forms a contact-dependent growth inhibition complex of CdiA-CT-NC101, CdiI-NC101 and EF-Tu; the complex is a dimer of heterotrimers. Stable CdiA-CT-NC101, EF-Tu complexes are not detected, nor are complexes with EF-Ts.

Its subcellular location is the secreted. It localises to the target cell. It is found in the target cell cytoplasm. Its function is as follows. Toxic component of a toxin-immunity protein module, which functions as a cellular contact-dependent growth inhibition (CDI) system. CDI modules allow bacteria to communicate with and inhibit the growth of closely related neighboring bacteria in a contact-dependent fashion (target cell counts decrease about 10,0000-fold for this system). CdiA toxicity is neutralized by its cognate immunity protein CdiI-NC101, but not by CdiI from other bacteria. The C-terminal domain (CT) cleaves tRNA endonucleolytically at the 5' side of guanine discriminator nucleotide sites (removes the last 4 nucleotides of the tRNA acceptor arm when the first nucleotide to be removed is G). Requires EF-Ts (tsf) for toxic function of the CT domain in vivo. In vitro the CT tRNase activity requires both EF-Tu (tufA) and EF-Ts. EF-Ts probably increases steady-state GTP-EF-Tu-aa-tRNA substrate levels. The CT domain is thought to remodel this same complex to displace the 3'-end of the aa-tRNA and allow it to enter into the toxin active site. The CT domain gains access to the cytoplasm of target cells by using integral inner membrane protein PTS system glucose-specific EIICB component (ptsG). Functionally, the CdiA protein is thought to be exported from the cell through the central lumen of CdiB, the other half of its two-partner system (TPS). The TPS domain probably remains associated with CdiB while the FHA-1 domain forms an extended filament with the receptor-binding domain (RBD) at its extremity; in the secretion arrested state the C-terminus of the RBD and YP domains form a hairpin-like structure as the FHA-2, PT and CT domains are periplasmic. The YP domain is probably responsible for this arrest at the point where it re-enters the host cell periplasm. Upon binding to a target cell outer membrane receptor a signal is transmitted to activate secretion. The filament elongates slightly, the rest of CdiA is secreted and the FHA-2 domain becomes stably associated with the target cell's outer membrane where it facilitates entry of the toxic CT domain into the target cell periplasm. From there the toxic CT domain is cleaved and gains access to the target cell cytoplasm via an inner membrane protein (PtsG for this CDI). This is tRNA nuclease CdiA from Escherichia coli (strain NC101).